The sequence spans 327 residues: Nucleotide-binding protein CYB_0992 (327 aa).

ATP is bound at residue 12-19 (GLTGAGKT).

Belongs to the RapZ-like family.

In terms of biological role, displays ATPase and GTPase activities. This chain is Nucleotide-binding protein CYB_0992, found in Synechococcus sp. (strain JA-2-3B'a(2-13)) (Cyanobacteria bacterium Yellowstone B-Prime).